A 163-amino-acid polypeptide reads, in one-letter code: MNPRRKKRLTLAVALIVGVAGAASLLLYALNSNLNLFYTPNEIINGKNDTGIKPEIGQRIRIGGMVTMGSMVRDPDSLHVEFAVHDSTGTQVIVTYDDLLPDLFREGQGIVAQGVLTDSGKLEATEVLAKHDENYMPPEVAEAMGKQHKKLEYQEGVEKTAQY.

At 1–8 (MNPRRKKR) the chain is on the cytoplasmic side. A helical; Signal-anchor for type II membrane protein membrane pass occupies residues 9 to 29 (LTLAVALIVGVAGAASLLLYA). Over 30–163 (LNSNLNLFYT…QEGVEKTAQY (134 aa)) the chain is Periplasmic. 2 residues coordinate heme: His-131 and Tyr-135.

Belongs to the CcmE/CycJ family.

It localises to the cell inner membrane. In terms of biological role, heme chaperone required for the biogenesis of c-type cytochromes. Transiently binds heme delivered by CcmC and transfers the heme to apo-cytochromes in a process facilitated by CcmF and CcmH. The polypeptide is Cytochrome c-type biogenesis protein CcmE (Shewanella denitrificans (strain OS217 / ATCC BAA-1090 / DSM 15013)).